The sequence spans 200 residues: Snake venom metalloproteinase rhomb-I (200 aa).

One can recognise a Peptidase M12B domain in the interval 4-200; the sequence is KYIELVVVAD…RKPQCILNKP (197 aa). Residues E7 and D91 each contribute to the Ca(2+) site. 3 disulfides stabilise this stretch: C115–C195, C155–C179, and C157–C162. H140 provides a ligand contact to Zn(2+). Residue E141 is part of the active site. H144 and H150 together coordinate Zn(2+). Ca(2+)-binding residues include C195 and N198.

In terms of assembly, monomer. Zn(2+) is required as a cofactor. As to expression, expressed by the venom gland.

It localises to the secreted. Snake venom zinc metalloproteinase that induces hemorrhage. The sequence is that of Snake venom metalloproteinase rhomb-I from Lachesis muta rhombeata (Bushmaster).